A 610-amino-acid chain; its full sequence is Atypical kinase COQ8, mitochondrial (610 aa).

Residues 98–111 (GVKHLQEQSSKEIK) are compositionally biased toward basic and acidic residues. The interval 98–144 (GVKHLQEQSSKEIKNPISQPILPNKKDEISPAKPSAIDSSIKDVTKS) is disordered.

Belongs to the protein kinase superfamily. ADCK protein kinase family.

The protein resides in the mitochondrion. It functions in the pathway cofactor biosynthesis; ubiquinone biosynthesis. In terms of biological role, atypical kinase involved in the biosynthesis of coenzyme Q, also named ubiquinone, an essential lipid-soluble electron transporter for aerobic cellular respiration. Its substrate specificity is still unclear: may act as a protein kinase that mediates phosphorylation of coq3. According to other reports, acts as a small molecule kinase, possibly a lipid kinase that phosphorylates a prenyl lipid in the ubiquinone biosynthesis pathway, as suggested by its ability to bind coenzyme Q lipid intermediates. The sequence is that of Atypical kinase COQ8, mitochondrial from Schizosaccharomyces pombe (strain 972 / ATCC 24843) (Fission yeast).